The primary structure comprises 420 residues: Protein BDLF2 (420 aa).

2 disordered regions span residues 1–21 (MVDE…SREE) and 64–129 (AAAV…GGQR). Residues 1 to 184 (MVDEQVAVEH…AETLAEPPRC (184 aa)) lie on the Intravirion side of the membrane. Positions 92-108 (TNTQDQNQNQTTRARTN) are enriched in low complexity. Residues 185-205 (FMLSFVFIYYCCYLAFLALLA) traverse the membrane as a helical; Signal-anchor for type II membrane protein segment. At 206–420 (FGFNPLFLPS…LEEVMYVMVQ (215 aa)) the chain is on the virion surface side. N-linked (GlcNAc...) asparagine; by host glycosylation is found at N258, N264, N300, N304, N371, and N384.

This sequence belongs to the herpesviridae BDLF2 family. As to quaternary structure, interacts with BMRF2.

Its subcellular location is the virion membrane. In terms of biological role, rearranges cellular actin to increase intercellular contacts and thereby promote virus cell-to-cell spreading. Induce the outgrowth of long, branched plasma membrane fronds to create intercellular network for virion traffic. The fronds are actin based and RhoA-dependent. This is Protein BDLF2 from Epstein-Barr virus (strain GD1) (HHV-4).